Consider the following 131-residue polypeptide: Glycine cleavage system H protein (131 aa).

The Lipoyl-binding domain maps to 24-106 (RVTVGISDHA…YGEGWIFVVE (83 aa)). Residue K65 is modified to N6-lipoyllysine.

It belongs to the GcvH family. In terms of assembly, the glycine cleavage system is composed of four proteins: P, T, L and H. (R)-lipoate is required as a cofactor.

Its function is as follows. The glycine cleavage system catalyzes the degradation of glycine. The H protein shuttles the methylamine group of glycine from the P protein to the T protein. The protein is Glycine cleavage system H protein of Xanthomonas oryzae pv. oryzae (strain MAFF 311018).